The sequence spans 590 residues: uncharacterized protein (590 aa).

2 disordered regions span residues 306–329 and 528–590; these read IAEP…GIPY and QPAP…LMNL. The segment covering 543–563 has biased composition (pro residues); the sequence is PSLPQPVPEPLAPQEPPPPGT.

This is an uncharacterized protein from Ictaluridae (bullhead catfishes).